Consider the following 629-residue polypeptide: tRNA uridine 5-carboxymethylaminomethyl modification enzyme MnmG (629 aa).

Residues 14–19, Val126, and Ser181 each bind FAD; that span reads GAGHAG. 273 to 287 serves as a coordination point for NAD(+); it reads GPRYCPSIEDKVVRF. Gln370 is a binding site for FAD.

Belongs to the MnmG family. As to quaternary structure, homodimer. Heterotetramer of two MnmE and two MnmG subunits. The cofactor is FAD.

Its subcellular location is the cytoplasm. Functionally, NAD-binding protein involved in the addition of a carboxymethylaminomethyl (cmnm) group at the wobble position (U34) of certain tRNAs, forming tRNA-cmnm(5)s(2)U34. In Geobacillus kaustophilus (strain HTA426), this protein is tRNA uridine 5-carboxymethylaminomethyl modification enzyme MnmG.